Here is a 362-residue protein sequence, read N- to C-terminus: Phosphoserine aminotransferase (362 aa).

S9 and R42 together coordinate L-glutamate. Pyridoxal 5'-phosphate is bound by residues 76-77 (GR), W102, T153, D174, and Q197. Residue K198 is modified to N6-(pyridoxal phosphate)lysine. Pyridoxal 5'-phosphate is bound at residue 239–240 (NT).

It belongs to the class-V pyridoxal-phosphate-dependent aminotransferase family. SerC subfamily. Homodimer. Pyridoxal 5'-phosphate serves as cofactor.

Its subcellular location is the cytoplasm. It carries out the reaction O-phospho-L-serine + 2-oxoglutarate = 3-phosphooxypyruvate + L-glutamate. The catalysed reaction is 4-(phosphooxy)-L-threonine + 2-oxoglutarate = (R)-3-hydroxy-2-oxo-4-phosphooxybutanoate + L-glutamate. Its pathway is amino-acid biosynthesis; L-serine biosynthesis; L-serine from 3-phospho-D-glycerate: step 2/3. It participates in cofactor biosynthesis; pyridoxine 5'-phosphate biosynthesis; pyridoxine 5'-phosphate from D-erythrose 4-phosphate: step 3/5. Catalyzes the reversible conversion of 3-phosphohydroxypyruvate to phosphoserine and of 3-hydroxy-2-oxo-4-phosphonooxybutanoate to phosphohydroxythreonine. The sequence is that of Phosphoserine aminotransferase from Shigella boydii serotype 4 (strain Sb227).